We begin with the raw amino-acid sequence, 314 residues long: Ecto-ADP-ribosyltransferase 4 (314 aa).

The first 46 residues, 1 to 46, serve as a signal peptide directing secretion; sequence MGPLINRCKKILLPTTVPPATMRIWLLGGPLPFLLLLSGLQRPTEG. Intrachain disulfides connect Cys69–Cys280 and Cys182–Cys231. Residues 91–276 enclose the TR mART core domain; sequence KNYFRMWQKA…LQLRSTGNLS (186 aa). A glycan (N-linked (GlcNAc...) asparagine) is linked at Asn114. An NAD(+)-binding site is contributed by Tyr126. A glycan (N-linked (GlcNAc...) asparagine) is linked at Asn178. NAD(+) is bound at residue Gln206. A glycan (N-linked (GlcNAc...) asparagine) is linked at Asn222. NAD(+) is bound at residue Ser240. N-linked (GlcNAc...) asparagine glycans are attached at residues Asn257 and Asn274. Residue Ala285 is the site of GPI-anchor amidated alanine attachment. Positions 286–314 are cleaved as a propeptide — removed in mature form; the sequence is SSKKCIPDPIAIASLSFLTSVIIFSKSRV.

This sequence belongs to the Arg-specific ADP-ribosyltransferase family.

It is found in the cell membrane. The enzyme catalyses L-arginyl-[protein] + NAD(+) = N(omega)-(ADP-D-ribosyl)-L-arginyl-[protein] + nicotinamide + H(+). In Pan troglodytes (Chimpanzee), this protein is Ecto-ADP-ribosyltransferase 4 (ART4).